We begin with the raw amino-acid sequence, 468 residues long: Glutamine synthetase (468 aa).

Residues 14–98 (HDVKYVDLRF…ILCDVYEPST (85 aa)) enclose the GS beta-grasp domain. Residues 106-468 (PRGIAKAAEK…PIEYKMYYSV (363 aa)) form the GS catalytic domain. Mg(2+) is bound by residues E131 and E133. An ATP-binding site is contributed by E209. Mg(2+) contacts are provided by E214 and E221. Residues 265 to 266 (NG) and G266 each bind L-glutamate. Mg(2+) is bound at residue H270. ATP is bound by residues 272–274 (HQS) and S274. L-glutamate-binding residues include R322, E328, and R340. Residues R340, R345, and K353 each contribute to the ATP site. Residue E358 coordinates Mg(2+). Residue R360 coordinates L-glutamate. O-AMP-tyrosine is present on Y398.

The protein belongs to the glutamine synthetase family. In terms of assembly, oligomer of 12 subunits arranged in the form of two hexameric ring. Requires Mg(2+) as cofactor.

The protein localises to the cytoplasm. It carries out the reaction L-glutamate + NH4(+) + ATP = L-glutamine + ADP + phosphate + H(+). With respect to regulation, the activity of this enzyme could be controlled by adenylation under conditions of abundant glutamine. Functionally, catalyzes the ATP-dependent biosynthesis of glutamine from glutamate and ammonia. The polypeptide is Glutamine synthetase (Azospirillum brasilense).